The chain runs to 125 residues: Flagellar protein FliT (125 aa).

The tract at residues 1-50 (MDNKMDLLSAYQRILSLSEQMLNLAKNEKWDELVDMEITYLKAVEVISHS) is required for homodimerization. The tract at residues 60–98 (LQQKMTNILQIILDNENEIKKLLQKRLDELSKLIKQASQ) is fliD binding.

The protein belongs to the FliT family. As to quaternary structure, homodimer. Interacts with FliD and FlhC.

The protein resides in the cytoplasm. Its subcellular location is the cytosol. Dual-function protein that regulates the transcription of class 2 flagellar operons and that also acts as an export chaperone for the filament-capping protein FliD. As a transcriptional regulator, acts as an anti-FlhDC factor; it directly binds FlhC, thus inhibiting the binding of the FlhC/FlhD complex to class 2 promoters, resulting in decreased expression of class 2 flagellar operons. As a chaperone, effects FliD transition to the membrane by preventing its premature polymerization, and by directing it to the export apparatus. In Photorhabdus laumondii subsp. laumondii (strain DSM 15139 / CIP 105565 / TT01) (Photorhabdus luminescens subsp. laumondii), this protein is Flagellar protein FliT.